Here is a 433-residue protein sequence, read N- to C-terminus: Amino-acid acetyltransferase (433 aa).

In terms of domain architecture, N-acetyltransferase spans 287-426; the sequence is ELVREAAIED…ASLYNYQRNS (140 aa).

Belongs to the acetyltransferase family. ArgA subfamily.

The protein localises to the cytoplasm. The enzyme catalyses L-glutamate + acetyl-CoA = N-acetyl-L-glutamate + CoA + H(+). Its pathway is amino-acid biosynthesis; L-arginine biosynthesis; N(2)-acetyl-L-ornithine from L-glutamate: step 1/4. This is Amino-acid acetyltransferase from Pseudomonas fluorescens (strain SBW25).